Reading from the N-terminus, the 590-residue chain is Pescadillo homolog (590 aa).

A disordered region spans residues 297-318 (AKADAGEEEEVEEEEEVEDDGL). The segment covering 302 to 318 (GEEEEVEEEEEVEDDGL) has biased composition (acidic residues). In terms of domain architecture, BRCT spans 337-446 (TAGQLFSNFT…KLLPVSEYAP (110 aa)). Positions 452-590 (AHLSPWGDAG…RKLNEKKEKR (139 aa)) are disordered. Positions 471-499 (DASDDDEDDEDIEVAPEDYDKDDEEEEAE) are enriched in acidic residues. Residues 489 to 589 (YDKDDEEEEA…RRKLNEKKEK (101 aa)) are a coiled coil. 3 stretches are compositionally biased toward basic and acidic residues: residues 500–517 (AEAK…KGTK), 532–547 (DKMT…DKKL), and 567–577 (NDKKSDREAEL).

This sequence belongs to the pescadillo family. Component of the NOP7 complex, composed of ERB1, NOP7 and YTM1. The complex is held together by ERB1, which interacts with NOP7 via its N-terminal domain and with YTM1 via a high-affinity interaction between the seven-bladed beta-propeller domains of the 2 proteins. The NOP7 complex associates with the 66S pre-ribosome.

The protein localises to the nucleus. It is found in the nucleolus. The protein resides in the nucleoplasm. Functionally, component of the NOP7 complex, which is required for maturation of the 25S and 5.8S ribosomal RNAs and formation of the 60S ribosome. The chain is Pescadillo homolog from Yarrowia lipolytica (strain CLIB 122 / E 150) (Yeast).